A 396-amino-acid polypeptide reads, in one-letter code: S-adenosylmethionine synthase (396 aa).

Residue His16 coordinates ATP. Asp18 lines the Mg(2+) pocket. Glu44 contacts K(+). L-methionine contacts are provided by Glu57 and Gln100. A flexible loop region spans residues 100–110 (QSVDIAQGVDR). ATP contacts are provided by residues 165–167 (DAK), Asp240, 246–247 (RK), Ala263, and Lys267. Residue Asp240 participates in L-methionine binding. Lys271 serves as a coordination point for L-methionine.

It belongs to the AdoMet synthase family. Homotetramer; dimer of dimers. Requires Mg(2+) as cofactor. The cofactor is K(+).

The protein resides in the cytoplasm. It carries out the reaction L-methionine + ATP + H2O = S-adenosyl-L-methionine + phosphate + diphosphate. It functions in the pathway amino-acid biosynthesis; S-adenosyl-L-methionine biosynthesis; S-adenosyl-L-methionine from L-methionine: step 1/1. Its function is as follows. Catalyzes the formation of S-adenosylmethionine (AdoMet) from methionine and ATP. The overall synthetic reaction is composed of two sequential steps, AdoMet formation and the subsequent tripolyphosphate hydrolysis which occurs prior to release of AdoMet from the enzyme. In Pseudomonas entomophila (strain L48), this protein is S-adenosylmethionine synthase.